A 215-amino-acid polypeptide reads, in one-letter code: Pyridoxine/pyridoxamine 5'-phosphate oxidase (215 aa).

Substrate-binding positions include 9-12 (RRDY) and Lys69. FMN is bound by residues 64–69 (RVLLLK), 79–80 (FT), Lys86, and Gln108. Substrate-binding residues include Tyr126, Arg130, and Ser134. FMN is bound by residues 143-144 (QS) and Trp188. Substrate is bound at residue 194–196 (RLH). Arg198 contributes to the FMN binding site.

This sequence belongs to the pyridoxamine 5'-phosphate oxidase family. As to quaternary structure, homodimer. The cofactor is FMN.

The enzyme catalyses pyridoxamine 5'-phosphate + O2 + H2O = pyridoxal 5'-phosphate + H2O2 + NH4(+). It carries out the reaction pyridoxine 5'-phosphate + O2 = pyridoxal 5'-phosphate + H2O2. It participates in cofactor metabolism; pyridoxal 5'-phosphate salvage; pyridoxal 5'-phosphate from pyridoxamine 5'-phosphate: step 1/1. It functions in the pathway cofactor metabolism; pyridoxal 5'-phosphate salvage; pyridoxal 5'-phosphate from pyridoxine 5'-phosphate: step 1/1. In terms of biological role, catalyzes the oxidation of either pyridoxine 5'-phosphate (PNP) or pyridoxamine 5'-phosphate (PMP) into pyridoxal 5'-phosphate (PLP). This chain is Pyridoxine/pyridoxamine 5'-phosphate oxidase, found in Pseudomonas entomophila (strain L48).